Here is a 144-residue protein sequence, read N- to C-terminus: Large ribosomal subunit protein uL11 (144 aa).

Belongs to the universal ribosomal protein uL11 family. In terms of assembly, part of the ribosomal stalk of the 50S ribosomal subunit. Interacts with L10 and the large rRNA to form the base of the stalk. L10 forms an elongated spine to which L12 dimers bind in a sequential fashion forming a multimeric L10(L12)X complex. In terms of processing, one or more lysine residues are methylated.

Its function is as follows. Forms part of the ribosomal stalk which helps the ribosome interact with GTP-bound translation factors. The chain is Large ribosomal subunit protein uL11 from Nocardia farcinica (strain IFM 10152).